The chain runs to 284 residues: MQKRSKIVSILLDSLPHIKLFSGSTMVIKYGGAAQINPTLKEQFAIDIVLLYMLGIKPVIVHGGGKKITDLLGKLGIESKFVEGHRITCIDSMKIVEMVLSGDINKEITSFLNHHGVKAVGISGKDSSLLRAEPKDGGRFGYTGEVKEVKAEIIYNLLEKGFVPVIAPVAEGEEAGHPGYNINADTAASEIAKAIKARKVIFLTDTQGVLDGEGSLMESLTLSEVEENKRSGVINGGMIPKVDACVECVKGGVEKAHIIDGRVEHSLLLELFTSEGIGTEILRD.

Substrate-binding positions include 64 to 65 (GG), Arg86, and Asn181.

The protein belongs to the acetylglutamate kinase family. ArgB subfamily.

It localises to the cytoplasm. The enzyme catalyses N-acetyl-L-glutamate + ATP = N-acetyl-L-glutamyl 5-phosphate + ADP. The protein operates within amino-acid biosynthesis; L-arginine biosynthesis; N(2)-acetyl-L-ornithine from L-glutamate: step 2/4. Functionally, catalyzes the ATP-dependent phosphorylation of N-acetyl-L-glutamate. In Wolinella succinogenes (strain ATCC 29543 / DSM 1740 / CCUG 13145 / JCM 31913 / LMG 7466 / NCTC 11488 / FDC 602W) (Vibrio succinogenes), this protein is Acetylglutamate kinase.